A 507-amino-acid polypeptide reads, in one-letter code: Maturase K (507 aa).

Belongs to the intron maturase 2 family. MatK subfamily.

It is found in the plastid. The protein localises to the chloroplast. Functionally, usually encoded in the trnK tRNA gene intron. Probably assists in splicing its own and other chloroplast group II introns. The chain is Maturase K from Lens ervoides (Beaded lentil).